A 170-amino-acid chain; its full sequence is Adenine phosphoribosyltransferase (170 aa).

Belongs to the purine/pyrimidine phosphoribosyltransferase family. As to quaternary structure, homodimer.

It localises to the cytoplasm. The enzyme catalyses AMP + diphosphate = 5-phospho-alpha-D-ribose 1-diphosphate + adenine. The protein operates within purine metabolism; AMP biosynthesis via salvage pathway; AMP from adenine: step 1/1. In terms of biological role, catalyzes a salvage reaction resulting in the formation of AMP, that is energically less costly than de novo synthesis. The sequence is that of Adenine phosphoribosyltransferase from Fervidobacterium nodosum (strain ATCC 35602 / DSM 5306 / Rt17-B1).